Consider the following 222-residue polypeptide: Peroxisomal membrane protein 11-4 (222 aa).

Topologically, residues 1 to 81 (MSAGDTLDKL…LNGLRRAPGE (81 aa)) are cytoplasmic. The chain crosses the membrane as a helical span at residues 82–102 (FGALAVLANAGEMVYFFFDHF). At 103–196 (TWLSRVGVLD…IGIADIEPNP (94 aa)) the chain is on the lumenal side. A helical transmembrane segment spans residues 197 to 217 (FCNHAVTLGISGLVSAWAGWY). Residues 218–222 (RNWPS) lie on the Cytoplasmic side of the membrane.

Belongs to the peroxin-11 family. In terms of tissue distribution, expressed in seedlings, shoots, leaf sheaths and flag leaf.

It localises to the peroxisome membrane. In terms of biological role, involved in peroxisomal proliferation. The sequence is that of Peroxisomal membrane protein 11-4 (PEX11-4) from Oryza sativa subsp. indica (Rice).